A 468-amino-acid chain; its full sequence is UDP-N-acetylmuramate--L-alanine ligase (468 aa).

114–120 (GTHGKTT) contributes to the ATP binding site.

This sequence belongs to the MurCDEF family.

Its subcellular location is the cytoplasm. The catalysed reaction is UDP-N-acetyl-alpha-D-muramate + L-alanine + ATP = UDP-N-acetyl-alpha-D-muramoyl-L-alanine + ADP + phosphate + H(+). It functions in the pathway cell wall biogenesis; peptidoglycan biosynthesis. In terms of biological role, cell wall formation. The polypeptide is UDP-N-acetylmuramate--L-alanine ligase (Methylorubrum extorquens (strain PA1) (Methylobacterium extorquens)).